A 432-amino-acid polypeptide reads, in one-letter code: Malate dehydrogenase [NADP], chloroplastic (432 aa).

The transit peptide at 1–40 directs the protein to the chloroplast; that stretch reads MGLSTVYSPAGPRLVPAPLGRCRSAQPRRPRRAPLATVRC. Residues 18-37 are disordered; that stretch reads PLGRCRSAQPRRPRRAPLAT. An intrachain disulfide couples C67 to C72. An NADP(+)-binding site is contributed by 96–102; sequence GAAGMIS. R177 and R183 together coordinate substrate. N190 is a binding site for NADP(+). Q197 contacts NAD(+). 214–216 provides a ligand contact to NADP(+); the sequence is VGN. Substrate contacts are provided by N216 and R247. H272 (proton acceptor) is an active-site residue. C408 and C420 are disulfide-bonded.

The protein belongs to the LDH/MDH superfamily. MDH type 2 family. In terms of assembly, homodimer.

The protein localises to the plastid. It localises to the chloroplast. The enzyme catalyses (S)-malate + NADP(+) = oxaloacetate + NADPH + H(+). Chloroplast NADP-MDH is activated upon illumination. In order to be enzymatically active, disulfide bridges on the protein must be reduced by thioredoxin which receives electrons from ferredoxin and the electron transport system of photosynthesis. In terms of biological role, the chloroplastic, NADP-dependent form is essential for the photosynthesis C4 cycle, which allows plants to circumvent the problem of photorespiration. In C4 plants, NADP-MDH activity acts to convert oxaloacetate to malate in chloroplasts of mesophyll cells for transport to the bundle sheath cells. The polypeptide is Malate dehydrogenase [NADP], chloroplastic (Zea mays (Maize)).